A 437-amino-acid polypeptide reads, in one-letter code: tRNA-2-methylthio-N(6)-dimethylallyladenosine synthase (437 aa).

In terms of domain architecture, MTTase N-terminal spans 3 to 120; the sequence is RKLFIETHGC…LPEMIDAART (118 aa). Cys-12, Cys-49, Cys-83, Cys-157, Cys-161, and Cys-164 together coordinate [4Fe-4S] cluster. In terms of domain architecture, Radical SAM core spans 143-370; that stretch reads RVDGPSAYVS…QQRINQQGFE (228 aa). The region spanning 373 to 437 is the TRAM domain; that stretch reads RRMVGTTQRI…PHSLRGSLLS (65 aa).

This sequence belongs to the methylthiotransferase family. MiaB subfamily. Monomer. Requires [4Fe-4S] cluster as cofactor.

The protein resides in the cytoplasm. It carries out the reaction N(6)-dimethylallyladenosine(37) in tRNA + (sulfur carrier)-SH + AH2 + 2 S-adenosyl-L-methionine = 2-methylsulfanyl-N(6)-dimethylallyladenosine(37) in tRNA + (sulfur carrier)-H + 5'-deoxyadenosine + L-methionine + A + S-adenosyl-L-homocysteine + 2 H(+). Catalyzes the methylthiolation of N6-(dimethylallyl)adenosine (i(6)A), leading to the formation of 2-methylthio-N6-(dimethylallyl)adenosine (ms(2)i(6)A) at position 37 in tRNAs that read codons beginning with uridine. This chain is tRNA-2-methylthio-N(6)-dimethylallyladenosine synthase, found in Stutzerimonas stutzeri (strain A1501) (Pseudomonas stutzeri).